We begin with the raw amino-acid sequence, 226 residues long: Beta-casein (226 aa).

An N-terminal signal peptide occupies residues 1-15 (MKVLILACLVALALA). T18 carries the post-translational modification Phosphothreonine; in form 5-P. At S21 the chain carries Phosphoserine; in form 4-P and form 5-P. S23 carries the phosphoserine; in form 3-P, form 4-P and form 5-P modification. S24 and S25 each carry phosphoserine; in form 1-P, form 2-P, form 3-P, form 4-P and form 5-P.

It belongs to the beta-casein family. Post-translationally, form 1-P is phosphorylated once; half of the molecules are phosphorylated on Ser-24, half on Ser-25. As to expression, mammary gland specific. Secreted in milk.

The protein resides in the secreted. In terms of biological role, important role in determination of the surface properties of the casein micelles. The protein is Beta-casein (CSN2) of Homo sapiens (Human).